A 301-amino-acid chain; its full sequence is Diaminopimelate epimerase (301 aa).

Substrate-binding residues include asparagine 15, glutamine 47, and asparagine 67. Residue cysteine 76 is the Proton donor of the active site. Residues 77-78, asparagine 163, asparagine 197, and 215-216 each bind substrate; these read GN and ER. Cysteine 224 (proton acceptor) is an active-site residue. 225–226 is a substrate binding site; it reads GS.

The protein belongs to the diaminopimelate epimerase family. In terms of assembly, homodimer.

It localises to the cytoplasm. The enzyme catalyses (2S,6S)-2,6-diaminopimelate = meso-2,6-diaminopimelate. It participates in amino-acid biosynthesis; L-lysine biosynthesis via DAP pathway; DL-2,6-diaminopimelate from LL-2,6-diaminopimelate: step 1/1. In terms of biological role, catalyzes the stereoinversion of LL-2,6-diaminopimelate (L,L-DAP) to meso-diaminopimelate (meso-DAP), a precursor of L-lysine and an essential component of the bacterial peptidoglycan. This Rhizobium rhizogenes (strain K84 / ATCC BAA-868) (Agrobacterium radiobacter) protein is Diaminopimelate epimerase.